The following is a 461-amino-acid chain: Ribulose bisphosphate carboxylase (461 aa).

Substrate is bound at residue asparagine 112. Lysine 167 acts as the Proton acceptor in catalysis. Lysine 169 provides a ligand contact to substrate. 3 residues coordinate Mg(2+): lysine 192, aspartate 194, and glutamate 195. The residue at position 192 (lysine 192) is an N6-carboxylysine. Catalysis depends on histidine 288, which acts as the Proton acceptor. The substrate site is built by arginine 289, histidine 322, and serine 369.

Belongs to the RuBisCO large chain family. Type II subfamily. In terms of assembly, homodimer. The cofactor is Mg(2+).

The catalysed reaction is 2 (2R)-3-phosphoglycerate + 2 H(+) = D-ribulose 1,5-bisphosphate + CO2 + H2O. The enzyme catalyses D-ribulose 1,5-bisphosphate + O2 = 2-phosphoglycolate + (2R)-3-phosphoglycerate + 2 H(+). Its function is as follows. RuBisCO catalyzes two reactions: the carboxylation of D-ribulose 1,5-bisphosphate, the primary event in carbon dioxide fixation, as well as the oxidative fragmentation of the pentose substrate. Both reactions occur simultaneously and in competition at the same active site. In Rhodopseudomonas palustris (strain ATCC BAA-98 / CGA009), this protein is Ribulose bisphosphate carboxylase.